Reading from the N-terminus, the 161-residue chain is SsrA-binding protein (161 aa).

The interval 138-161 (DKRTDSKEKDWNRDKARIMKSSLR) is disordered. The span at 139–154 (KRTDSKEKDWNRDKAR) shows a compositional bias: basic and acidic residues.

It belongs to the SmpB family.

The protein localises to the cytoplasm. Its function is as follows. Required for rescue of stalled ribosomes mediated by trans-translation. Binds to transfer-messenger RNA (tmRNA), required for stable association of tmRNA with ribosomes. tmRNA and SmpB together mimic tRNA shape, replacing the anticodon stem-loop with SmpB. tmRNA is encoded by the ssrA gene; the 2 termini fold to resemble tRNA(Ala) and it encodes a 'tag peptide', a short internal open reading frame. During trans-translation Ala-aminoacylated tmRNA acts like a tRNA, entering the A-site of stalled ribosomes, displacing the stalled mRNA. The ribosome then switches to translate the ORF on the tmRNA; the nascent peptide is terminated with the 'tag peptide' encoded by the tmRNA and targeted for degradation. The ribosome is freed to recommence translation, which seems to be the essential function of trans-translation. The sequence is that of SsrA-binding protein from Aliivibrio fischeri (strain MJ11) (Vibrio fischeri).